The sequence spans 208 residues: MRDPVDYFHNSLVPMVVEQSSRGERAFDIYSRLLRERIIFLTGPVEDQGASLIVAQLLFLEAENPKKEISFYINSPGGVVTSGLSIYDTMQFIRCPVTTLCVGQAASMGSLLLAAGEAGHRFALPNARIMVHQPSGGFQGQATDILIHAREIEALKKRLNEIYVKHTGREYETIHQALERDNFMTADAAKEFGLIDDILHKRPEPAAA.

The Nucleophile role is filled by Ser-107. Residue His-132 is part of the active site.

It belongs to the peptidase S14 family. As to quaternary structure, fourteen ClpP subunits assemble into 2 heptameric rings which stack back to back to give a disk-like structure with a central cavity, resembling the structure of eukaryotic proteasomes.

It localises to the cytoplasm. It catalyses the reaction Hydrolysis of proteins to small peptides in the presence of ATP and magnesium. alpha-casein is the usual test substrate. In the absence of ATP, only oligopeptides shorter than five residues are hydrolyzed (such as succinyl-Leu-Tyr-|-NHMec, and Leu-Tyr-Leu-|-Tyr-Trp, in which cleavage of the -Tyr-|-Leu- and -Tyr-|-Trp bonds also occurs).. Functionally, cleaves peptides in various proteins in a process that requires ATP hydrolysis. Has a chymotrypsin-like activity. Plays a major role in the degradation of misfolded proteins. The polypeptide is ATP-dependent Clp protease proteolytic subunit (Methylorubrum extorquens (strain CM4 / NCIMB 13688) (Methylobacterium extorquens)).